A 461-amino-acid polypeptide reads, in one-letter code: Demethyllactenocin mycarosyltransferase (461 aa).

Residues 1–21 (MAGLRPGAGVPPGTPWPISPG) are disordered.

The protein belongs to the UDP-glycosyltransferase family.

It carries out the reaction dTDP-beta-L-mycarose + demethyllactenocin = demethylmacrocin + dTDP + H(+). Its function is as follows. Involved in the biosynthesis of mycarose which is a 6-deoxyhexose sugar required during production of the macrolide antibiotic tylosin. Catalyzes the transfer of L-mycarosyl from dTDP-beta-L-mycarose to demethyllactenocin to yield demethylmacrocin. The sequence is that of Demethyllactenocin mycarosyltransferase (tylCV) from Streptomyces fradiae (Streptomyces roseoflavus).